The sequence spans 87 residues: Small ribosomal subunit protein bS18B (87 aa).

This sequence belongs to the bacterial ribosomal protein bS18 family. Part of the 30S ribosomal subunit. Forms a tight heterodimer with protein bS6.

Functionally, binds as a heterodimer with protein bS6 to the central domain of the 16S rRNA, where it helps stabilize the platform of the 30S subunit. The sequence is that of Small ribosomal subunit protein bS18B from Mycobacterium marinum (strain ATCC BAA-535 / M).